The sequence spans 688 residues: UvrABC system protein B (688 aa).

The Helicase ATP-binding domain maps to 41–429; that stretch reads ANFEAGLAKQ…AGEVTELVVR (389 aa). 54–61 serves as a coordination point for ATP; the sequence is GVTGSGKT. Residues 107 to 130 carry the Beta-hairpin motif; it reads YYDYYQPEAYVPSSDTFIEKDSSI. The 167-residue stretch at 446 to 612 folds into the Helicase C-terminal domain; it reads QVDDLMSEIH…SVERPISDIM (167 aa). The tract at residues 616–646 is disordered; sequence REDAAEKKSGKGRSKSRQVAEETPDYRAMKP. Residues 633–645 are compositionally biased toward basic and acidic residues; that stretch reads QVAEETPDYRAMK. The UVR domain occupies 650–685; it reads AGKLKSLEQKMYQHAKDLEFEAAAQIRDQIQKLKTA.

This sequence belongs to the UvrB family. Forms a heterotetramer with UvrA during the search for lesions. Interacts with UvrC in an incision complex.

Its subcellular location is the cytoplasm. The UvrABC repair system catalyzes the recognition and processing of DNA lesions. A damage recognition complex composed of 2 UvrA and 2 UvrB subunits scans DNA for abnormalities. Upon binding of the UvrA(2)B(2) complex to a putative damaged site, the DNA wraps around one UvrB monomer. DNA wrap is dependent on ATP binding by UvrB and probably causes local melting of the DNA helix, facilitating insertion of UvrB beta-hairpin between the DNA strands. Then UvrB probes one DNA strand for the presence of a lesion. If a lesion is found the UvrA subunits dissociate and the UvrB-DNA preincision complex is formed. This complex is subsequently bound by UvrC and the second UvrB is released. If no lesion is found, the DNA wraps around the other UvrB subunit that will check the other stand for damage. The protein is UvrABC system protein B of Xanthomonas oryzae pv. oryzae (strain KACC10331 / KXO85).